We begin with the raw amino-acid sequence, 420 residues long: Adenylosuccinate synthetase (420 aa).

Residues 12–18 (GDEGKGK) and 40–42 (GHT) contribute to the GTP site. D13 functions as the Proton acceptor in the catalytic mechanism. Mg(2+) contacts are provided by D13 and G40. Residues 13–16 (DEGK), 38–41 (NAGH), T128, R142, Q221, T236, and R299 contribute to the IMP site. Catalysis depends on H41, which acts as the Proton donor. Position 295 to 301 (295 to 301 (ATTGRPR)) interacts with substrate. GTP is bound by residues R301, 327–329 (KAD), and 399–401 (SYG).

Belongs to the adenylosuccinate synthetase family. As to quaternary structure, homodimer. Mg(2+) is required as a cofactor.

It is found in the cytoplasm. The enzyme catalyses IMP + L-aspartate + GTP = N(6)-(1,2-dicarboxyethyl)-AMP + GDP + phosphate + 2 H(+). The protein operates within purine metabolism; AMP biosynthesis via de novo pathway; AMP from IMP: step 1/2. Plays an important role in the de novo pathway of purine nucleotide biosynthesis. Catalyzes the first committed step in the biosynthesis of AMP from IMP. The protein is Adenylosuccinate synthetase of Petrotoga mobilis (strain DSM 10674 / SJ95).